Here is a 373-residue protein sequence, read N- to C-terminus: Quinolinate synthase (373 aa).

2 residues coordinate iminosuccinate: H46 and S63. C109 is a [4Fe-4S] cluster binding site. Iminosuccinate is bound by residues 142-144 (YMN) and S163. C232 is a [4Fe-4S] cluster binding site. Iminosuccinate is bound by residues 258-260 (HPE) and T275. Position 324 (C324) interacts with [4Fe-4S] cluster.

Belongs to the quinolinate synthase family. Type 3 subfamily. It depends on [4Fe-4S] cluster as a cofactor.

Its subcellular location is the cytoplasm. The enzyme catalyses iminosuccinate + dihydroxyacetone phosphate = quinolinate + phosphate + 2 H2O + H(+). Its pathway is cofactor biosynthesis; NAD(+) biosynthesis; quinolinate from iminoaspartate: step 1/1. Catalyzes the condensation of iminoaspartate with dihydroxyacetone phosphate to form quinolinate. The chain is Quinolinate synthase from Acidobacterium capsulatum (strain ATCC 51196 / DSM 11244 / BCRC 80197 / JCM 7670 / NBRC 15755 / NCIMB 13165 / 161).